A 317-amino-acid chain; its full sequence is Hps1-dma1 cluster cytochrome P450 monooxygenase cyp3.1 (317 aa).

A disordered region spans residues 183–205 (PAIETDRKTSSHSRSPTALADKQ). A heme-binding site is contributed by cysteine 260.

This sequence belongs to the cytochrome P450 family. The cofactor is heme.

It functions in the pathway secondary metabolite biosynthesis. Its function is as follows. Cytochrome P450 monooxygenase; part of the hps1-dma1 gene cluster that probably mediates the biosynthesis a derivative of cyclopiazonic acid (CPA). The hybrid polyketide synthase-nonribosomal peptide synthetase (PKS-NRPS) nps1 might incorporates acetyl-CoA, malonyl-CoA, and tryptophan (Trp) and utilizes a C-terminal redox-incompetent reductase domain to make and release the tryptophan tetramic acid, cyclo-acetoacetyl-L-tryptophan (c-AATrp), as the first intermediate in the pathway. In addition, the cluster also includes the tryptophan dimethylallyltransferase dma1, the FAD-dependent oxidoreductase toxD, the cytochrome P450 monooxygenase cyp3.1 and the methyltransferase DOTSEDRAFT_139328; the latter 2 being not present in all CPA-producing fungi but involved in additional modifications that occur in biosynthesis the of a range of CPA and CPA-like products. Further studies are required to clarify whether the CPA-like hps1-dma1 cluster is functional or a non-functional relic reflecting evolution of D.septosporum. In Dothistroma septosporum (strain NZE10 / CBS 128990) (Red band needle blight fungus), this protein is Hps1-dma1 cluster cytochrome P450 monooxygenase cyp3.1 (cyp3.1).